Here is a 119-residue protein sequence, read N- to C-terminus: Beta-2-microglobulin (119 aa).

The signal sequence occupies residues 1–20 (MARSVTVIFLVLVSLAVVLA). The region spanning 25–114 (PQIQVYSRHP…VTLKEPKTVT (90 aa)) is the Ig-like C1-type domain. Residues cysteine 45 and cysteine 100 are joined by a disulfide bond.

Belongs to the beta-2-microglobulin family. As to quaternary structure, heterodimer of an alpha chain and a beta chain. Beta-2-microglobulin is the beta-chain of major histocompatibility complex class I molecules. Forms a heterotrimer with MR1 and a metabolite antigen.

The protein resides in the secreted. Functionally, component of the class I major histocompatibility complex (MHC). Involved in the presentation of peptide antigens to the immune system. This Rattus norvegicus (Rat) protein is Beta-2-microglobulin (B2m).